A 440-amino-acid polypeptide reads, in one-letter code: Gamma-aminobutyric acid receptor subunit pi (440 aa).

Positions 1–23 are cleaved as a signal peptide; it reads MSYSLYLAFVCLNLLAQRMCIQG. Over 24–241 the chain is Extracellular; sequence NQFNVEVSRS…LVLQFELRRN (218 aa). N-linked (GlcNAc...) asparagine glycans are attached at residues Asn43, Asn102, and Asn145. Residues Cys160 and Cys174 are joined by a disulfide bond. Asn196 and Asn228 each carry an N-linked (GlcNAc...) asparagine glycan. The chain crosses the membrane as a helical span at residues 242 to 262; that stretch reads VLYFILETYVPSTFLVVLSWV. At 263–270 the chain is on the cytoplasmic side; the sequence is SFWISLES. The helical transmembrane segment at 271 to 290 threads the bilayer; the sequence is VPARTCIGVTTVLSMTTLMI. The Extracellular portion of the chain corresponds to 291–301; it reads GSRTSLPNTNC. A helical transmembrane segment spans residues 302–322; that stretch reads FIKAIDVYLGICFSFVFGALL. The Cytoplasmic segment spans residues 323–419; that stretch reads EYAVAHYSSL…NPSNVDRYSK (97 aa). The helical transmembrane segment at 420–440 threads the bilayer; the sequence is LLFPLIFMLANVFYWAYYMYF.

This sequence belongs to the ligand-gated ion channel (TC 1.A.9) family. Gamma-aminobutyric acid receptor (TC 1.A.9.5) subfamily. GABRP sub-subfamily. Heteropentamer, formed by a combination of alpha (GABRA1-6), beta (GABRB1-3), gamma (GABRG1-3), delta (GABRD), epsilon (GABRE), rho (GABRR1-3), pi (GABRP) and theta (GABRQ) chains, each subunit exhibiting distinct physiological and pharmacological properties. Expressed in lungs, in alveolar epithelium.

It is found in the cell membrane. Its subcellular location is the apical cell membrane. It carries out the reaction chloride(in) = chloride(out). Its function is as follows. Pi subunit of the heteropentameric ligand-gated chloride channel gated by gamma-aminobutyric acid (GABA). GABA-gated chloride channels, also named GABA(A) receptors (GABAAR), consist of five subunits arranged around a central pore and contain GABA active binding site(s) located at the alpha and beta subunit interfaces. When activated by GABA, GABAARs selectively allow the flow of chloride anions across the cell membrane down their electrochemical gradient. Pi-containing GABAARs are mostly located in peripheral tissues. In the uterus, pi subunits modulate uterus contraction by altering the sensitivity of GABAARs to pregnanolone. In the lungs, pi-containing GABAARs contribute to pulmonary fluid transport via luminal secretion of chloride. This Rattus norvegicus (Rat) protein is Gamma-aminobutyric acid receptor subunit pi.